Here is a 163-residue protein sequence, read N- to C-terminus: 3-isopropylmalate dehydratase small subunit (163 aa).

It belongs to the LeuD family. LeuD type 2 subfamily. In terms of assembly, heterodimer of LeuC and LeuD.

It catalyses the reaction (2R,3S)-3-isopropylmalate = (2S)-2-isopropylmalate. It functions in the pathway amino-acid biosynthesis; L-leucine biosynthesis; L-leucine from 3-methyl-2-oxobutanoate: step 2/4. Its function is as follows. Catalyzes the isomerization between 2-isopropylmalate and 3-isopropylmalate, via the formation of 2-isopropylmaleate. The protein is 3-isopropylmalate dehydratase small subunit of Ruminiclostridium cellulolyticum (strain ATCC 35319 / DSM 5812 / JCM 6584 / H10) (Clostridium cellulolyticum).